Here is a 484-residue protein sequence, read N- to C-terminus: tRNA sulfurtransferase (484 aa).

In terms of domain architecture, THUMP spans 63-167 (EAFAERLACI…KESLYLVSKR (105 aa)). ATP-binding positions include 185–186 (LI), lysine 267, glycine 289, and glutamine 298. A disulfide bridge links cysteine 346 with cysteine 458. Positions 406-484 (INSGEVIIDV…GYDNVKVYRP (79 aa)) constitute a Rhodanese domain. Cysteine 458 serves as the catalytic Cysteine persulfide intermediate.

Belongs to the ThiI family.

The protein localises to the cytoplasm. The enzyme catalyses [ThiI sulfur-carrier protein]-S-sulfanyl-L-cysteine + a uridine in tRNA + 2 reduced [2Fe-2S]-[ferredoxin] + ATP + H(+) = [ThiI sulfur-carrier protein]-L-cysteine + a 4-thiouridine in tRNA + 2 oxidized [2Fe-2S]-[ferredoxin] + AMP + diphosphate. It catalyses the reaction [ThiS sulfur-carrier protein]-C-terminal Gly-Gly-AMP + S-sulfanyl-L-cysteinyl-[cysteine desulfurase] + AH2 = [ThiS sulfur-carrier protein]-C-terminal-Gly-aminoethanethioate + L-cysteinyl-[cysteine desulfurase] + A + AMP + 2 H(+). Its pathway is cofactor biosynthesis; thiamine diphosphate biosynthesis. Functionally, catalyzes the ATP-dependent transfer of a sulfur to tRNA to produce 4-thiouridine in position 8 of tRNAs, which functions as a near-UV photosensor. Also catalyzes the transfer of sulfur to the sulfur carrier protein ThiS, forming ThiS-thiocarboxylate. This is a step in the synthesis of thiazole, in the thiamine biosynthesis pathway. The sulfur is donated as persulfide by IscS. The protein is tRNA sulfurtransferase of Shewanella woodyi (strain ATCC 51908 / MS32).